The primary structure comprises 377 residues: GDP-mannose 3,5-epimerase (377 aa).

An N-acetylglycine modification is found at Gly-2. Residues 34–60, Asp-58, and Asp-78 contribute to the NAD(+) site; that span reads GAGG…SDWK. Residues Gly-103 and 143–145 each bind substrate; that span reads SAC. The NAD(+) site is built by Tyr-174 and Lys-178. Tyr-174 functions as the Proton acceptor in the catalytic mechanism. Residues Asn-203, 216–218, Lys-225, 241–243, Arg-306, and Ser-356 contribute to the substrate site; these read EKA and QTR. Ser-369 is modified (phosphoserine).

Belongs to the NAD(P)-dependent epimerase/dehydratase family. In terms of assembly, homodimer. Interacts with chaperone Hsc70-3 protein, which may regulate epimerase activity. The cofactor is NAD(+).

The catalysed reaction is GDP-alpha-D-mannose = GDP-beta-L-gulose. The enzyme catalyses GDP-beta-L-gulose = GDP-beta-L-galactose. Its pathway is cofactor biosynthesis; L-ascorbate biosynthesis via GDP-alpha-D-mannose pathway; L-ascorbate from GDP-alpha-D-mannose: step 1/5. Its activity is regulated as follows. Inhibited by GDP and GDP-D-glucose. Functionally, catalyzes a reversible epimerization of GDP-D-mannose that precedes the committed step in the biosynthesis of vitamin C (L-ascorbate), resulting in the hydrolysis of the highly energetic glycosyl-pyrophosphoryl linkage. Able to catalyze 2 distinct epimerization reactions and can release both GDP-L-galactose and GDP-L-gulose from GDP-mannose. In Arabidopsis thaliana (Mouse-ear cress), this protein is GDP-mannose 3,5-epimerase.